The following is a 139-amino-acid chain: ATP synthase epsilon chain (139 aa).

This sequence belongs to the ATPase epsilon chain family. F-type ATPases have 2 components, CF(1) - the catalytic core - and CF(0) - the membrane proton channel. CF(1) has five subunits: alpha(3), beta(3), gamma(1), delta(1), epsilon(1). CF(0) has three main subunits: a, b and c.

It localises to the cell inner membrane. Produces ATP from ADP in the presence of a proton gradient across the membrane. This Nitrosospira multiformis (strain ATCC 25196 / NCIMB 11849 / C 71) protein is ATP synthase epsilon chain.